Here is an 807-residue protein sequence, read N- to C-terminus: Mechanosensitive cation channel TMEM63A (807 aa).

Topologically, residues 1–51 are extracellular; the sequence is MTDSPFLELWQSRAVSVREQLGLGDRPNDSYCYNSAKNSTVLQGVTFGGIP. Asn-38 carries N-linked (GlcNAc...) asparagine glycosylation. The helical transmembrane segment at 52–74 threads the bilayer; that stretch reads TVLLIDVSCFLFLILVFSIIRRR. The Cytoplasmic segment spans residues 75-134; it reads FWDYGRIALVSEADSEPRFQRLSSTSSSGQQDFENELGCCPWLTAIFRLHDDQILEWCGE. A helical membrane pass occupies residues 135 to 167; the sequence is DAIHYLSFQRHIIFLLVVVSFLSLCVILPVNLS. Over 168–191 the chain is Extracellular; sequence GDLLDKDPYSFGRTTIANLQTDND. The chain crosses the membrane as a helical span at residues 192–217; the sequence is LLWLHTIFAVIYLFLTVGFMRHHTQS. Over 218-416 the chain is Cytoplasmic; it reads IKYKEENLVR…CWKNLSIQGL (199 aa). Residues 219 to 414 are intracellular linker IL2; confers mechanosensitivity; it reads KYKEENLVRR…DICWKNLSIQ (196 aa). A helical membrane pass occupies residues 417 to 444; that stretch reads RWWLQWLGINFTLFLGLFFLTTPSIILS. Over 445–462 the chain is Extracellular; the sequence is TMDKFNVTKPIHALNNPI. Asn-450 carries an N-linked (GlcNAc...) asparagine glycan. A helical membrane pass occupies residues 463–490; the sequence is ISQFFPTLLLWSFSALLPSIVYYSTLLE. Over 491 to 495 the chain is Cytoplasmic; the sequence is SHWTK. The helical transmembrane segment at 496-532 threads the bilayer; it reads SGENQIMMTKVYIFLIFMVLILPSLGLTSLDFFFRWL. At 533–554 the chain is on the extracellular side; it reads FDKTSSEASIRLECVFLPDQGA. The helical transmembrane segment at 555–586 threads the bilayer; that stretch reads FFVNYVIASAFIGNGMELLRLPGLILYTFRMI. The tract at residues 555-586 is gating helix; it reads FFVNYVIASAFIGNGMELLRLPGLILYTFRMI. Topologically, residues 587–606 are cytoplasmic; that stretch reads MAKTAADRRNVKQNQAFQYE. Residues 607–624 traverse the membrane as a helical segment; that stretch reads FGAMYAWMLCVFTVIMAY. At 625–628 the chain is on the extracellular side; the sequence is SITC. The helical transmembrane segment at 629–651 threads the bilayer; sequence PIIAPFGLIYILLKHMVDRHNLY. Residues 652–661 lie on the Cytoplasmic side of the membrane; that stretch reads FIYLPAKLEK. The chain crosses the membrane as a helical span at residues 662–689; the sequence is GIHFAAVNQALAAPILCLFWLYFFSFLR. Residues 690–694 are Extracellular-facing; the sequence is LGMKA. The chain crosses the membrane as a helical span at residues 695–709; that stretch reads PATLFTFLVVLLTIL. Residues 710 to 807 are Cytoplasmic-facing; it reads VCLAHTCFGY…GSVAAAPQEA (98 aa). Ser-739 carries the post-translational modification Phosphoserine.

It belongs to the CSC1 (TC 1.A.17) family. Monomer. In terms of processing, N-Glycosylated.

It localises to the lysosome membrane. The protein resides in the early endosome membrane. The protein localises to the cell membrane. The enzyme catalyses Ca(2+)(in) = Ca(2+)(out). Its function is as follows. Mechanosensitive cation channel with low conductance and high activation threshold. In contrast to TMEM63B, does not show phospholipid scramblase activity. Acts as a regulator of lysosomal morphology by mediating lysosomal mechanosensitivity. Important for the baby's first breath and respiration throughout life. Upon lung inflation conducts cation currents in alveolar type 1 and 2 cells triggering lamellar body exocytosis and surfactant secretion into airspace. Also acts as an osmosensitive cation channel preferentially activated by hypotonic stress. This chain is Mechanosensitive cation channel TMEM63A (TMEM63A), found in Pongo abelii (Sumatran orangutan).